The following is a 1070-amino-acid chain: Inactive tyrosine-protein kinase 7 (1070 aa).

A signal peptide spans 1-30 (MGAARGSPARPRRLPLLSVLLLPLLGGTQT). Ig-like C2-type domains lie at 31–120 (AIVF…ASFN), 128–218 (PVVL…FTLS), 225–317 (ARVV…EATL), 309–407 (PPII…VNIT), 412–497 (PSWL…ARVQ), 503–586 (KFTP…HVQL), and 578–680 (GQIR…APLY). At 31 to 704 (AIVFIKQPSS…SPPPYKMIQT (674 aa)) the chain is on the extracellular side. Cysteines 53 and 101 form a disulfide. 6 N-linked (GlcNAc...) asparagine glycosylation sites follow: N116, N175, N184, N214, N268, and N283. A disulfide bridge connects residues C150 and C200. Intrachain disulfides connect C246/C301 and C343/C391. N-linked (GlcNAc...) asparagine glycosylation is found at N405, N463, N567, and N646. Disulfide bonds link C433–C481, C524–C570, and C613–C664. Residues 705-725 (IGLSVGAAVAYIIAVLGLMFY) traverse the membrane as a helical segment. The Cytoplasmic portion of the chain corresponds to 726 to 1070 (CKKRCKAKRL…LGDSTVDSKP (345 aa)). 2 disordered regions span residues 736-759 (QKQPEGEEPEMECLNGGPLQNGQP) and 773-793 (GSGPAATNKRHSTSDKMHFPR). The segment at 794 to 1070 (SSLQPITTLG…LGDSTVDSKP (277 aa)) is interaction with CTNNB1. A Protein kinase; inactive domain is found at 796 to 1066 (LQPITTLGKS…IASALGDSTV (271 aa)). Position 1064 is a phosphoserine (S1064).

The protein belongs to the protein kinase superfamily. Tyr protein kinase family. Insulin receptor subfamily. In terms of assembly, interacts with CTNNB1. In terms of processing, MMP14 cleaves PTK7 between Pro-621 and Leu-622 generating an N-terminal soluble (70 kDa) fragment and a membrane C-terminal (50 kDa) fragment. Proteolysis by MMP14 regulates PTK7 function in non-canonical Wnt signaling pathway. Highly expressed in lung, liver, pancreas, kidney, placenta and melanocytes. Weakly expressed in thyroid gland, ovary, brain, heart and skeletal muscle. Also expressed in erythroleukemia cells. But not expressed in colon.

The protein localises to the membrane. It localises to the cell junction. In terms of biological role, inactive tyrosine kinase involved in Wnt signaling pathway. Component of both the non-canonical (also known as the Wnt/planar cell polarity signaling) and the canonical Wnt signaling pathway. Functions in cell adhesion, cell migration, cell polarity, proliferation, actin cytoskeleton reorganization and apoptosis. Has a role in embryogenesis, epithelial tissue organization and angiogenesis. The protein is Inactive tyrosine-protein kinase 7 (PTK7) of Homo sapiens (Human).